Here is an 896-residue protein sequence, read N- to C-terminus: Protein bride of sevenless (896 aa).

The signal sequence occupies residues 1 to 31 (MKVMDALQSGRRKPLPVALLCILVTVFCVLE). At 32-530 (CHGADLTSPT…MFWRIKMDTW (499 aa)) the chain is on the extracellular side. The disordered stretch occupies residues 38-84 (TSPTKKSAPLRITKPQPTSQQAKPISITTRAPTTVASTTDDEVSSSV). The segment covering 52 to 64 (PQPTSQQAKPISI) has biased composition (polar residues). The segment covering 65-84 (TTRAPTTVASTTDDEVSSSV) has biased composition (low complexity). Asn-183, Asn-307, Asn-474, and Asn-485 each carry an N-linked (GlcNAc...) asparagine glycan. 7 helical membrane-spanning segments follow: residues 531-554 (VATG…FIVV), 570-588 (ILLL…PYSI), 615-637 (VFIM…VMLA), 655-676 (AVIC…LVVM), 693-712 (WLWG…GALI), 728-748 (IVIG…LSLF), and 759-781 (LGLQ…FLIV). Topologically, residues 782-896 (RGIERSDIAQ…SPDHNKITRF (115 aa)) are cytoplasmic. Disordered stretches follow at residues 825–844 (SQDE…PLRG) and 861–896 (ANIN…ITRF). Positions 874–884 (QSPSRSSVSSL) are enriched in low complexity.

This sequence belongs to the G-protein coupled receptor 3 family. Expressed exclusively by R8 photoreceptor cells and is internalized in a sev-dependent manner by R7 cells.

Its subcellular location is the cell membrane. Acts as a ligand for sevenless tyrosine-kinase receptor during eye development. The polypeptide is Protein bride of sevenless (boss) (Drosophila melanogaster (Fruit fly)).